Reading from the N-terminus, the 260-residue chain is Phosphoribosylaminoimidazole-succinocarboxamide synthase (260 aa).

The protein belongs to the SAICAR synthetase family.

The catalysed reaction is 5-amino-1-(5-phospho-D-ribosyl)imidazole-4-carboxylate + L-aspartate + ATP = (2S)-2-[5-amino-1-(5-phospho-beta-D-ribosyl)imidazole-4-carboxamido]succinate + ADP + phosphate + 2 H(+). It participates in purine metabolism; IMP biosynthesis via de novo pathway; 5-amino-1-(5-phospho-D-ribosyl)imidazole-4-carboxamide from 5-amino-1-(5-phospho-D-ribosyl)imidazole-4-carboxylate: step 1/2. This Pelagibacter ubique (strain HTCC1062) protein is Phosphoribosylaminoimidazole-succinocarboxamide synthase.